A 259-amino-acid polypeptide reads, in one-letter code: Methyltransferase sdnD (259 aa).

This sequence belongs to the FkbM methyltransferase family.

Its pathway is antibiotic biosynthesis. Methyltransferase; part of the gene cluster that mediates the biosynthesis of sordarin and hypoxysordarin, glycoside antibiotics with a unique tetracyclic diterpene aglycone structure. First, the geranylgeranyl diphosphate synthase sdnC constructs GGDP from farnesyl diphosphate and isopentenyl diphosphate. The diterpene cyclase sdnA then catalyzes the cyclization of GGDP to afford cycloaraneosene. Cycloaraneosene is then hydroxylated four times by the putative cytochrome P450 monooxygenases sdnB, sdnE, sdnF and sdnH to give a hydroxylated cycloaraneosene derivative such as cycloaraneosene-8,9,13,19-tetraol. Although the order of the hydroxylations is unclear, at least C8, C9 and C13 of the cycloaraneosene skeleton are hydroxylated before the sordaricin formation. Dehydration of the 13-hydroxy group of the hydroxylated cycloaraneosene derivative might be catalyzed by an unassigned hypothetical protein such as sdnG and sdnP to construct the cyclopentadiene moiety. The FAD-dependent oxidoreductase sdnN is proposed to catalyze the oxidation at C9 of the hydroxylated cycloaraneosene derivative and also catalyze the Baeyer-Villiger oxidation to give the lactone intermediate. The presumed lactone intermediate would be hydrolyzed to give an acrolein moiety and a carboxylate moiety. Then, [4+2]cycloaddition would occur between the acrolein moiety and the cyclopentadiene moiety to give sordaricin. SdnN might also be involved in the [4+2]cycloaddition after the hypothesized oxidation to accommodate the oxidized product and prompt the [4+2]cycloaddition. GDP-6-deoxy-D-altrose may be biosynthesized from GDP-D-mannose by the putative GDP-mannose-4,6-dehydratase sdnI and the short-chain dehydrogenase sdnK. The glycosyltransferase sdnJ catalyzes the attachment of 6-deoxy-D-altrose onto the 19-hydroxy group of sordaricin to give 4'-O-demethylsordarin. The methyltransferase sdnD would complete the biosynthesis of sordarin. Sordarin can be further modified into hypoxysordarin. The unique acyl chain at the 3'-hydroxy group of hypoxysordarin would be constructed by an iterative type I PKS sdnO and the trans-acting polyketide methyltransferase sdnL. SdnL would be responsible for the introduction of an alpha-methyl group of the polyketide chain. Alternatively, the beta-lactamase-like protein sdnR might be responsible for the cleavage and transfer of the polyketide chain from the PKS sdnO to sordarin. Two putative cytochrome P450 monooxygenases, sdnQ and sdnT, might catalyze the epoxidations of the polyketide chain to complete the biosynthesis of hypoxysordarin. Transcriptional regulators sdnM and sdnS are presumably encoded for the transcriptional regulation of the expression of the sdn gene cluster. This is Methyltransferase sdnD from Sordaria araneosa (Pleurage araneosa).